The following is a 237-amino-acid chain: Demethylmenaquinone methyltransferase (237 aa).

S-adenosyl-L-methionine-binding positions include Thr62, Asp80, 102-103 (DA), and Ser119.

Belongs to the class I-like SAM-binding methyltransferase superfamily. MenG/UbiE family.

It catalyses the reaction a 2-demethylmenaquinol + S-adenosyl-L-methionine = a menaquinol + S-adenosyl-L-homocysteine + H(+). It functions in the pathway quinol/quinone metabolism; menaquinone biosynthesis; menaquinol from 1,4-dihydroxy-2-naphthoate: step 2/2. Methyltransferase required for the conversion of demethylmenaquinol (DMKH2) to menaquinol (MKH2). The protein is Demethylmenaquinone methyltransferase of Renibacterium salmoninarum (strain ATCC 33209 / DSM 20767 / JCM 11484 / NBRC 15589 / NCIMB 2235).